Here is a 367-residue protein sequence, read N- to C-terminus: Uracil nucleotide/cysteinyl leukotriene receptor (367 aa).

The tract at residues 1 to 28 is disordered; the sequence is MSKRSWWAGSRKPPREMLKLSGSDSSQS. At 1–64 the chain is on the extracellular side; it reads MSKRSWWAGS…TPLENMLFAS (64 aa). A glycan (N-linked (GlcNAc...) asparagine) is linked at N42. A helical membrane pass occupies residues 65 to 85; sequence FYLLDFILALVGNTLALWLFI. The Cytoplasmic portion of the chain corresponds to 86–92; that stretch reads RDHKSGT. The helical transmembrane segment at 93-113 threads the bilayer; sequence PANVFLMHLAVADLSCVLVLP. The Extracellular segment spans residues 114 to 133; sequence TRLVYHFSGNHWPFGEIACR. An intrachain disulfide couples C132 to C209. A helical transmembrane segment spans residues 134 to 154; sequence LTGFLFYLNMYASIYFLTCIS. Residues 155 to 175 are Cytoplasmic-facing; it reads ADRFLAIVHPVKSLKLRRPLY. The chain crosses the membrane as a helical span at residues 176-196; the sequence is AHLACAFLWVVVAVAMAPLLV. The Extracellular segment spans residues 197–223; sequence SPQTVQTNHTVVCLQLYREKASHHALV. The N-linked (GlcNAc...) asparagine glycan is linked to N204. Residues 224-244 form a helical membrane-spanning segment; sequence SLAVAFTFPFITTVTCYLLII. Topologically, residues 245-260 are cytoplasmic; the sequence is RSLRQGLRVEKRLKTK. A helical transmembrane segment spans residues 261–281; the sequence is AVRMIAIVLAIFLVCFVPYHV. N-linked (GlcNAc...) asparagine glycosylation is present at N282. The Extracellular segment spans residues 282–308; that stretch reads NRSVYVLHYRSHGASCATQRILALANR. Residues 309–329 traverse the membrane as a helical segment; sequence ITSCLTSLNGALDPIMYFFVA. The Cytoplasmic portion of the chain corresponds to 330-367; that stretch reads EKFRHALCNLLCGKRLKGPPPSFEGKTNESSLSAKSEL.

The protein belongs to the G-protein coupled receptor 1 family. Expressed in brain, kidney, heart and umbilical vein endothelial cells. Highest level in brain.

It is found in the cell membrane. In terms of biological role, dual specificity receptor for uracil nucleotides and cysteinyl leukotrienes (CysLTs). Signals through G(i) and inhibition of adenylyl cyclase. May mediate brain damage by nucleotides and CysLTs following ischemia. In Homo sapiens (Human), this protein is Uracil nucleotide/cysteinyl leukotriene receptor (GPR17).